A 452-amino-acid chain; its full sequence is MCVYKSNSNNSNPSFIFERTVQEASSNDLFLQPPVSASNTSHSSRSNSFYNLQTISPIPISGSEVRTPSLRKNSNNVSSPLDNVIPTSRSASNSTTSSLAHQEYILNPICNMQNHHHRRRTLENSVAPALDASCSIVNDENTDLSDVDMVYSRRPSSAVSLNMALLARTNSATLPSSESSPASPDLKLSRSHSHSAATRPTLNNINNTGMTTTTSNGEPNSRILRFYSYVDMLNDEKLAQANNTPTSRPPMKSQAYSCPFILKRSPPQAYSSSSATTTFSNPFIKTTELPATSPYVSPQQSARQYSNNANNNAKSPKNRSSSILFQRQSILSNVDPVANMHKNPKFQIESSDSEEEDLTMDMLDPSFPLSSSLRSSANLASNPELATQTPLSTSSSYTAIGKPMPLSTDPSYVSSSNTLSSEHELRVEKVSEVLKKKVSNGGFSTEFNSCDT.

Phosphoserine occurs at positions 8, 11, 14, 56, 74, and 79. The tract at residues 61–94 is disordered; it reads SGSEVRTPSLRKNSNNVSSPLDNVIPTSRSASNS. The segment covering 64 to 81 has biased composition (polar residues); the sequence is EVRTPSLRKNSNNVSSPL. Thr-121 is subject to Phosphothreonine. Residues Ser-145, Ser-156, and Ser-160 each carry the phosphoserine modification. Phosphothreonine is present on Thr-169. Phosphoserine is present on Ser-171. Polar residues predominate over residues 171 to 182; it reads SATLPSSESSPA. The segment at 171–220 is disordered; the sequence is SATLPSSESSPASPDLKLSRSHSHSAATRPTLNNINNTGMTTTTSNGEPN. A Phosphothreonine modification is found at Thr-173. Phosphoserine occurs at positions 183 and 189. Low complexity predominate over residues 201–216; the sequence is TLNNINNTGMTTTTSN. Tyr-227 carries the post-translational modification Phosphotyrosine. Residues Ser-228, Ser-257, and Ser-265 each carry the phosphoserine modification. Disordered stretches follow at residues 290 to 321 and 348 to 402; these read PATS…NRSS and IESS…AIGK. Residue Tyr-295 is modified to Phosphotyrosine. Phosphoserine is present on residues Ser-297, Ser-320, and Ser-353. Positions 299–321 are enriched in low complexity; sequence QQSARQYSNNANNNAKSPKNRSS. Over residues 365-383 the composition is skewed to low complexity; sequence PSFPLSSSLRSSANLASNP. Residues 384-398 are compositionally biased toward polar residues; that stretch reads ELATQTPLSTSSSYT. Phosphoserine is present on Ser-439.

To yeast VHS2.

The protein resides in the cytoplasm. In Saccharomyces cerevisiae (strain ATCC 204508 / S288c) (Baker's yeast), this protein is Protein MLF3 (MLF3).